The following is a 90-amino-acid chain: Phosphocarrier protein NPr (90 aa).

The HPr domain maps to 2 to 90 (TVKQTVEISN…ALFNAGFDED (89 aa)). Residue H16 is the Pros-phosphohistidine intermediate of the active site.

This sequence belongs to the HPr family.

The protein resides in the cytoplasm. Functionally, component of the phosphoenolpyruvate-dependent nitrogen-metabolic phosphotransferase system (nitrogen-metabolic PTS), that seems to be involved in regulating nitrogen metabolism. The phosphoryl group from phosphoenolpyruvate (PEP) is transferred to the phosphoryl carrier protein NPr by enzyme I-Ntr. Phospho-NPr then transfers it to EIIA-Ntr. Could function in the transcriptional regulation of sigma-54 dependent operons in conjunction with the NPr (PtsO) and EIIA-Ntr (PtsN) proteins. In Klebsiella oxytoca, this protein is Phosphocarrier protein NPr (ptsO).